The primary structure comprises 320 residues: UDP-N-acetylenolpyruvoylglucosamine reductase (320 aa).

The FAD-binding PCMH-type domain maps to 35–216 (RAGGPAQVLF…KQAMDEVQHH (182 aa)). The active site involves Arg-181. Catalysis depends on Ser-230, which acts as the Proton donor. Glu-300 is a catalytic residue.

Belongs to the MurB family. FAD serves as cofactor.

The protein localises to the cytoplasm. The enzyme catalyses UDP-N-acetyl-alpha-D-muramate + NADP(+) = UDP-N-acetyl-3-O-(1-carboxyvinyl)-alpha-D-glucosamine + NADPH + H(+). The protein operates within cell wall biogenesis; peptidoglycan biosynthesis. Functionally, cell wall formation. The sequence is that of UDP-N-acetylenolpyruvoylglucosamine reductase from Brucella anthropi (strain ATCC 49188 / DSM 6882 / CCUG 24695 / JCM 21032 / LMG 3331 / NBRC 15819 / NCTC 12168 / Alc 37) (Ochrobactrum anthropi).